A 249-amino-acid polypeptide reads, in one-letter code: Exosome complex component Rrp4 (249 aa).

One can recognise an S1 motif domain in the interval 72–143 (GDTIIGLVED…RTISPVLTVK (72 aa)). The KH domain maps to 151–213 (PLGTVMDIMP…EALIEAINII (63 aa)).

The protein belongs to the RRP4 family. In terms of assembly, component of the archaeal exosome complex. Forms a trimer of Rrp4 and/or Csl4 subunits. The trimer associates with a hexameric ring-like arrangement composed of 3 Rrp41-Rrp42 heterodimers.

It is found in the cytoplasm. Its function is as follows. Non-catalytic component of the exosome, which is a complex involved in RNA degradation. Increases the RNA binding and the efficiency of RNA degradation. Confers strong poly(A) specificity to the exosome. The protein is Exosome complex component Rrp4 of Sulfolobus acidocaldarius (strain ATCC 33909 / DSM 639 / JCM 8929 / NBRC 15157 / NCIMB 11770).